We begin with the raw amino-acid sequence, 173 residues long: Transcription factor HES-2 (173 aa).

Positions 13–70 (LRKSLKPLLEKRRRARINQSLSQLKGLILPLLGRENSNCSKLEKADVLEMTVRFLQEL) constitute a bHLH domain. In terms of domain architecture, Orange spans 86–119 (YREGYSACVARLARVLPACRVLEPAVSARLLEHL). The interval 128-173 (LDGGRAGDSSGPSAPAPAPASAPEPASAPVPSPPSPPCGPGLWRPW) is disordered. The segment covering 141–166 (APAPAPASAPEPASAPVPSPPSPPCG) has biased composition (pro residues). The WRPW motif signature appears at 170–173 (WRPW).

As to quaternary structure, transcription repression requires formation of a complex with a corepressor protein of the Groucho/TLE family. In terms of tissue distribution, expressed in placenta, pancreatic cancer, colon cancer with RER, cervical cancer, and in head and neck tumors.

It localises to the nucleus. Transcriptional repressor of genes that require a bHLH protein for their transcription. The protein is Transcription factor HES-2 (HES2) of Homo sapiens (Human).